Here is a 463-residue protein sequence, read N- to C-terminus: Asparagine--tRNA ligase (463 aa).

It belongs to the class-II aminoacyl-tRNA synthetase family. Homodimer.

It localises to the cytoplasm. The catalysed reaction is tRNA(Asn) + L-asparagine + ATP = L-asparaginyl-tRNA(Asn) + AMP + diphosphate + H(+). This Bacillus thuringiensis subsp. konkukian (strain 97-27) protein is Asparagine--tRNA ligase.